Consider the following 89-residue polypeptide: Signal recognition particle 19 kDa protein (89 aa).

This sequence belongs to the SRP19 family. In terms of assembly, part of the signal recognition particle protein translocation system, which is composed of SRP and FtsY. Archaeal SRP consists of a 7S RNA molecule of 300 nucleotides and two protein subunits: SRP54 and SRP19.

The protein resides in the cytoplasm. In terms of biological role, involved in targeting and insertion of nascent membrane proteins into the cytoplasmic membrane. Binds directly to 7S RNA and mediates binding of the 54 kDa subunit of the SRP. The polypeptide is Signal recognition particle 19 kDa protein (Methanococcus maripaludis (strain C5 / ATCC BAA-1333)).